A 116-amino-acid polypeptide reads, in one-letter code: PTS system N,N'-diacetylchitobiose-specific EIIA component (116 aa).

The PTS EIIA type-3 domain occupies 15–113 (EELEEVVMGL…ITELIELHEK (99 aa)). The active-site Tele-phosphohistidine intermediate is the histidine 89. The residue at position 89 (histidine 89) is a Phosphohistidine; by HPr.

As to quaternary structure, forms a complex with ChbB (EIIB). ChbA is a homotrimer. Mg(2+) is required as a cofactor.

It is found in the cytoplasm. The phosphoenolpyruvate-dependent sugar phosphotransferase system (sugar PTS), a major carbohydrate active transport system, catalyzes the phosphorylation of incoming sugar substrates concomitantly with their translocation across the cell membrane. The enzyme II ChbABC PTS system is involved in the transport of the chitin disaccharide N,N'-diacetylchitobiose (GlcNAc2). This chain is PTS system N,N'-diacetylchitobiose-specific EIIA component (chbA), found in Escherichia coli O157:H7.